The chain runs to 900 residues: UPF0182 protein Ppro_3567 (900 aa).

A run of 7 helical transmembrane segments spans residues F15 to L35, G60 to A80, V112 to W132, F174 to L194, L210 to F230, V257 to V277, and L282 to V302.

It belongs to the UPF0182 family.

The protein resides in the cell membrane. The sequence is that of UPF0182 protein Ppro_3567 from Pelobacter propionicus (strain DSM 2379 / NBRC 103807 / OttBd1).